A 507-amino-acid chain; its full sequence is Ribose import ATP-binding protein RbsA 2 (507 aa).

ABC transporter domains lie at 7–245 and 249–498; these read FSLD…VGRN and LFTR…MPQS. Position 39–46 (39–46) interacts with ATP; it reads GENGAGKS.

This sequence belongs to the ABC transporter superfamily. Ribose importer (TC 3.A.1.2.1) family. In terms of assembly, the complex is composed of an ATP-binding protein (RbsA), two transmembrane proteins (RbsC) and a solute-binding protein (RbsB).

The protein localises to the cell inner membrane. The enzyme catalyses D-ribose(out) + ATP + H2O = D-ribose(in) + ADP + phosphate + H(+). Its function is as follows. Part of the ABC transporter complex RbsABC involved in ribose import. Responsible for energy coupling to the transport system. This is Ribose import ATP-binding protein RbsA 2 from Mesorhizobium japonicum (strain LMG 29417 / CECT 9101 / MAFF 303099) (Mesorhizobium loti (strain MAFF 303099)).